A 218-amino-acid polypeptide reads, in one-letter code: Transmembrane gamma-carboxyglutamic acid protein 1 (218 aa).

Positions 1 to 20 (MGRVFLTGEKANSVLKRYPR) are excised as a propeptide. Positions 20–66 (RANGFFEEIRQGNIERECKEEFCTFEEAREAFENNEKTKEFWSTYTK) constitute a Gla domain. Over 21–80 (ANGFFEEIRQGNIERECKEEFCTFEEAREAFENNEKTKEFWSTYTKAQQGESNRGSDWFQ) the chain is Extracellular. Residues cysteine 37 and cysteine 42 are joined by a disulfide bond. The chain crosses the membrane as a helical span at residues 81–101 (FYLTFPLIFGLFIILLVIFLI). Residues 102 to 218 (WRCFLRNKTR…PMVPVVTTIK (117 aa)) are Cytoplasmic-facing. The interval 161-195 (TRLSNCDPPPTYEEATGQVNLQRSETEPHLDPPPE) is disordered.

Post-translationally, gla residues are produced after subsequent post-translational modifications of glutamate by a vitamin K-dependent gamma-carboxylase.

The protein resides in the membrane. This chain is Transmembrane gamma-carboxyglutamic acid protein 1 (PRRG1), found in Pongo abelii (Sumatran orangutan).